The primary structure comprises 277 residues: MAYSLTRKLLKDWKYFMRHPEKTQGLFHVRPHDSDLHLWHVVMYEPRTSLEVYLLLYIGGNDQDPYIIMKCLSPNCCFPINRTVSMTHLNYLLLKDLGLQDLLFHIWQPLFHIQATEDLQYSPSTVKFNRAWNRIIYKDFKSYFPELIGTLQPGDYSIVKSYSKNHNISNSNGGSVNEFMSSYNAQSHTFHAQDNSKNPYTNSSIGKSSMLSTLNNNNVNKRTHDYNAIDFMTKNLLACDDDSIHPVVSSKRSRTLACPDETNDNRGSEHYTKRKKI.

The tract at residues 254–277 is disordered; sequence RTLACPDETNDNRGSEHYTKRKKI.

Its function is as follows. Not known; its elevated expression suppresses the conditional cell cycle defects associated with UBC3/CDC34 mutations. The sequence is that of Ubiquitin-conjugating enzyme suppressor 1 (UBS1) from Saccharomyces cerevisiae (strain ATCC 204508 / S288c) (Baker's yeast).